A 310-amino-acid polypeptide reads, in one-letter code: Ribonuclease Z (310 aa).

Positions 60, 62, 64, 65, 140, 209, and 269 each coordinate Zn(2+). Catalysis depends on D64, which acts as the Proton acceptor.

It belongs to the RNase Z family. As to quaternary structure, homodimer. Zn(2+) is required as a cofactor.

The enzyme catalyses Endonucleolytic cleavage of RNA, removing extra 3' nucleotides from tRNA precursor, generating 3' termini of tRNAs. A 3'-hydroxy group is left at the tRNA terminus and a 5'-phosphoryl group is left at the trailer molecule.. In terms of biological role, zinc phosphodiesterase, which displays some tRNA 3'-processing endonuclease activity. Probably involved in tRNA maturation, by removing a 3'-trailer from precursor tRNA. The chain is Ribonuclease Z from Methanococcus maripaludis (strain C7 / ATCC BAA-1331).